Consider the following 386-residue polypeptide: Patatin-14 (386 aa).

Residues Met-1 to Ala-23 form the signal peptide. Residues Leu-32–Leu-229 form the PNPLA domain. The GXGXXG signature appears at Gly-36 to Gly-41. The short motif at Gly-75–Gly-79 is the GXSXG element. Ser-77 serves as the catalytic Nucleophile. Asn-115 is a glycosylation site (N-linked (GlcNAc...) asparagine). Asp-215 acts as the Proton acceptor in catalysis. Positions Asp-215–Gly-217 match the DGA/G motif. Positions Glu-321 to Ala-381 form a coiled coil.

This sequence belongs to the patatin family. In terms of tissue distribution, tuber.

It localises to the vacuole. In terms of biological role, probable lipolytic acyl hydrolase (LAH), an activity which is thought to be involved in the response of tubers to pathogens. This is Patatin-14 from Solanum tuberosum (Potato).